Consider the following 319-residue polypeptide: Probable cell division protein WhiA (319 aa).

Residues 278–311 (SLKELGQMLNPPVGKSGVNHRLRRLESLAEAFSR) constitute a DNA-binding region (H-T-H motif).

This sequence belongs to the WhiA family.

Its function is as follows. Involved in cell division and chromosome segregation. This chain is Probable cell division protein WhiA, found in Heliobacterium modesticaldum (strain ATCC 51547 / Ice1).